A 320-amino-acid polypeptide reads, in one-letter code: Ferrochelatase (320 aa).

2 residues coordinate Fe cation: H194 and E275.

Belongs to the ferrochelatase family. In terms of assembly, monomer.

Its subcellular location is the cytoplasm. The catalysed reaction is heme b + 2 H(+) = protoporphyrin IX + Fe(2+). The protein operates within porphyrin-containing compound metabolism; protoheme biosynthesis; protoheme from protoporphyrin-IX: step 1/1. Functionally, catalyzes the ferrous insertion into protoporphyrin IX. The chain is Ferrochelatase from Salmonella arizonae (strain ATCC BAA-731 / CDC346-86 / RSK2980).